We begin with the raw amino-acid sequence, 644 residues long: Kininogen-1 (644 aa).

Residues 1-18 (MKLITILFLCSRLLLSLT) form the signal peptide. At Gln19 the chain carries Pyrrolidone carboxylic acid; in mature form. Residues 28–132 (CNDKDLFKAV…TQTCQITPAE (105 aa)) form the Cystatin kininogen-type 1 domain. 9 disulfides stabilise this stretch: Cys28-Cys614, Cys83-Cys94, Cys107-Cys126, Cys142-Cys145, Cys206-Cys218, Cys229-Cys248, Cys264-Cys267, Cys328-Cys340, and Cys351-Cys370. Residue Asn48 is glycosylated (N-linked (GlcNAc...) (complex) asparagine). An O-glycosylated at one site only region spans residues 120 to 153 (SVATQTCQITPAEGPVVTAQYDCLGCVHPISTQS). One can recognise a Cystatin kininogen-type 2 domain in the interval 151-254 (TQSPDLEPIL…SQNCDIYPGK (104 aa)). Asn169 is a glycosylation site (N-linked (GlcNAc...) asparagine). Asn205 carries an N-linked (GlcNAc...) (complex) asparagine glycan. The 104-residue stretch at 273–376 (TNSPELEETL…TVNCQPLGMI (104 aa)) folds into the Cystatin kininogen-type 3 domain. Asn294 carries an N-linked (GlcNAc...) (complex) asparagine glycan. Ser332 carries the post-translational modification Phosphoserine; by FAM20C. Pro383 is modified (4-hydroxyproline; partial). Positions 387–555 (PFRSSRIGEI…TPIPSLAKPG (169 aa)) are disordered. A glycan (O-linked (GalNAc...) threonine) is linked at Thr401. Positions 418–434 (DSGKEQGHTRRHDWGHE) are enriched in basic and acidic residues. Repeats lie at residues 420-449 (GKEQ…KHER), 450-479 (DQGH…KFKL), and 480-510 (DDDL…KNKG). The span at 435 to 446 (KQRKHNLGHGHK) shows a compositional bias: basic residues. The span at 477-493 (FKLDDDLEHQGGHVLDH) shows a compositional bias: basic and acidic residues. Over residues 494-518 (GHKHKHGHGHGKHKNKGKKNGKHNG) the composition is skewed to basic residues. Positions 524-539 (LASSSEDSTTPSAQTQ) are enriched in polar residues. Thr533, Thr542, Thr546, Thr557, and Thr571 each carry an O-linked (GalNAc...) threonine glycan. O-linked (GalNAc...) serine glycosylation is present at Ser577. An O-linked (GalNAc...) threonine glycan is attached at Thr628.

As to quaternary structure, interacts (high molecular weight kininogen) (via amino acids 402-532) with triafestin-1 and triafestin-2, anticoagulant proteins from Triatoma infestans. Interacts (high molecular weight kininogen) (via amino acids 402-532) with short form salivary protein D7R1, an anticoagulant protein from Anopheles stephensi. Interacts (high molecular weight kininogen) (via amino acids 421-466 and 459-513) with haemaphysalin, an anticoagulant protein from Haemaphysalis longicornis. Bradykinin is inactivated by ACE, which removes the dipeptide Arg-Phe from its C-terminus. In terms of processing, bradykinin is released from kininogen by plasma kallikrein. Post-translationally, hydroxylation of Pro-383 occurs prior to the release of bradykinin. Phosphorylated by FAM20C in the extracellular medium. In terms of processing, N- and O-glycosylated. O-glycosylated with core 1 or possibly core 8 glycans. Post-translationally, (Microbial infection) Bradykinin is generated upon proteolytic cleavage by S.pyogenes SpeB to produce hypotension during septic shock. As to expression, secreted in plasma. T-kinin is detected in malignant ovarian, colon and breast carcinomas, but not in benign tumors.

It is found in the secreted. The protein resides in the extracellular space. Kininogens are inhibitors of thiol proteases. HMW-kininogen plays an important role in blood coagulation by helping to position optimally prekallikrein and factor XI next to factor XII; HMW-kininogen inhibits the thrombin- and plasmin-induced aggregation of thrombocytes. LMW-kininogen inhibits the aggregation of thrombocytes. LMW-kininogen is in contrast to HMW-kininogen not involved in blood clotting. Functionally, the active peptide bradykinin is a potent vasodilatator that is released from HMW-kininogen shows a variety of physiological effects: (A) influence in smooth muscle contraction, (B) induction of hypotension, (C) natriuresis and diuresis, (D) decrease in blood glucose level, (E) it is a mediator of inflammation and causes (E1) increase in vascular permeability, (E2) stimulation of nociceptors (4E3) release of other mediators of inflammation (e.g. prostaglandins), (F) it has a cardioprotective effect (directly via bradykinin action, indirectly via endothelium-derived relaxing factor action). This chain is Kininogen-1 (KNG1), found in Homo sapiens (Human).